Consider the following 680-residue polypeptide: tRNA 5-methylaminomethyl-2-thiouridine biosynthesis bifunctional protein MnmC (680 aa).

Positions 1 to 267 (MTAEPNKPCQ…MAAILSSDAP (267 aa)) are tRNA (mnm(5)s(2)U34)-methyltransferase. An FAD-dependent cmnm(5)s(2)U34 oxidoreductase region spans residues 273–680 (IGGGLASAHL…LRKLLKGKSL (408 aa)).

It in the N-terminal section; belongs to the methyltransferase superfamily. tRNA (mnm(5)s(2)U34)-methyltransferase family. In the C-terminal section; belongs to the DAO family. FAD is required as a cofactor.

The protein localises to the cytoplasm. It carries out the reaction 5-aminomethyl-2-thiouridine(34) in tRNA + S-adenosyl-L-methionine = 5-methylaminomethyl-2-thiouridine(34) in tRNA + S-adenosyl-L-homocysteine + H(+). Its function is as follows. Catalyzes the last two steps in the biosynthesis of 5-methylaminomethyl-2-thiouridine (mnm(5)s(2)U) at the wobble position (U34) in tRNA. Catalyzes the FAD-dependent demodification of cmnm(5)s(2)U34 to nm(5)s(2)U34, followed by the transfer of a methyl group from S-adenosyl-L-methionine to nm(5)s(2)U34, to form mnm(5)s(2)U34. The protein is tRNA 5-methylaminomethyl-2-thiouridine biosynthesis bifunctional protein MnmC of Shewanella sp. (strain W3-18-1).